The primary structure comprises 496 residues: Transcription termination factor MTERF9, chloroplastic (496 aa).

The transit peptide at 1-44 (MAGFSLYCFKNPRILFTLPSESPLFVLGSDKCSPATRRPSRKTR) directs the protein to the chloroplast. Disordered regions lie at residues 57–90 (IINP…DDDW) and 102–155 (YEKK…SWRL). Acidic residues predominate over residues 74-90 (DSDEDDDDDDDDDDDDW). Basic residues predominate over residues 105-123 (KKPKSHKQTIAKKSVKKGI). Residues 146 to 155 (SEKKKESWRL) show a composition bias toward basic and acidic residues.

Belongs to the mTERF family.

Its subcellular location is the plastid. The protein resides in the chloroplast. In terms of biological role, transcription termination factor required for processing and steady-state levels of plastid transcripts. May play a role in response to abiotic stresses. This Arabidopsis thaliana (Mouse-ear cress) protein is Transcription termination factor MTERF9, chloroplastic.